Here is a 497-residue protein sequence, read N- to C-terminus: Low affinity K(+) transporter 1 (497 aa).

The Extracellular segment spans residues 1–29 (MFNHDWKYSINSKTFADLNIELFRNHKFK). The chain crosses the membrane as a helical span at residues 30–50 (TVLNYIIGVVGWNGLKLALFV). The Cytoplasmic portion of the chain corresponds to 51 to 80 (SDIYTCIKLLAFNSWSNNIIKPYLPFKISK). A helical transmembrane segment spans residues 81-101 (WLFSGCILASIVLLIWEAIAG). Residues 102–216 (MRIYKTGNIS…TNHEEAVILS (115 aa)) lie on the Extracellular side of the membrane. A helical membrane pass occupies residues 217-237 (LMLFSFIIWALFVFKFLLAVI). At 238-497 (CSIFVYYKII…EDEDRTYNYT (260 aa)) the chain is on the cytoplasmic side. A phosphoserine mark is found at Ser291 and Ser319. The interval 420–469 (EFHGPLDSMPNTTNNIRNFNSNSSRPRPPPLQTKSSINSKADSNDNGRIY) is disordered. The segment covering 429 to 444 (PNTTNNIRNFNSNSSR) has biased composition (low complexity). Residues 451 to 465 (QTKSSINSKADSNDN) show a composition bias toward polar residues.

The protein belongs to the KCH1 low affinity K(+) transporter family.

It is found in the vacuole membrane. Its subcellular location is the cell membrane. It carries out the reaction K(+)(in) = K(+)(out). Its function is as follows. Low affinity potassium transporter that, with PRM6/KCH2, participates in high-affinity Ca(2+) influx system (HACS) activation during the response to mating pheromone. Directly promotes K(+) influx and HACS may electrochemically respond to this K(+) influx. KCH1 and KCH2 act at the apex of the calcium signaling pathway that is used for survival during prolonged exposures to mating pheromones. The sequence is that of Low affinity K(+) transporter 1 from Saccharomyces cerevisiae (strain ATCC 204508 / S288c) (Baker's yeast).